The following is a 687-amino-acid chain: Glycine--tRNA ligase beta subunit (687 aa).

It belongs to the class-II aminoacyl-tRNA synthetase family. Tetramer of two alpha and two beta subunits.

It is found in the cytoplasm. The enzyme catalyses tRNA(Gly) + glycine + ATP = glycyl-tRNA(Gly) + AMP + diphosphate. The polypeptide is Glycine--tRNA ligase beta subunit (Geobacter sp. (strain M21)).